We begin with the raw amino-acid sequence, 637 residues long: Chaperone protein HtpG (637 aa).

Residues 1–345 (MSQQETHGFQ…SNDLPLNVSR (345 aa)) are a; substrate-binding. The b stretch occupies residues 346 to 562 (EILQDNHITK…EGEMSTQMIK (217 aa)). The interval 563–637 (LMQAAGQPVP…MNQMLLANMK (75 aa)) is c.

This sequence belongs to the heat shock protein 90 family. In terms of assembly, homodimer.

The protein localises to the cytoplasm. Its function is as follows. Molecular chaperone. Has ATPase activity. This is Chaperone protein HtpG from Shewanella putrefaciens (strain CN-32 / ATCC BAA-453).